The chain runs to 361 residues: Terpene synthase 6 (361 aa).

The short motif at D81–A86 is the DDxx(x)D/E motif element. The short motif at N223 to E231 is the NDxxSxxxD/E motif element.

This sequence belongs to the terpene synthase family.

The enzyme catalyses (2E,6E)-farnesyl diphosphate = (2S,3R,6S,9S)-(-)-protoillud-7-ene + diphosphate. In terms of biological role, terpene synthase that converts its substrate farnesyl diphosphate (FPP) into the sesquiterpene (2S,3R,6S,9S)-(-)-protoillud-7-ene. The sequence is that of Terpene synthase 6 from Dictyostelium discoideum (Social amoeba).